A 126-amino-acid chain; its full sequence is Acidic phospholipase A2 3 (126 aa).

A propeptide spanning residues 1 to 7 (SNRPMPL) is cleaved from the precursor. Disulfide bonds link cysteine 18/cysteine 78, cysteine 33/cysteine 125, cysteine 35/cysteine 51, cysteine 50/cysteine 106, cysteine 57/cysteine 99, cysteine 67/cysteine 92, and cysteine 85/cysteine 97. Ca(2+)-binding residues include tyrosine 34, glycine 36, and glycine 38. Histidine 54 is an active-site residue. Aspartate 55 is a binding site for Ca(2+). Aspartate 100 is a catalytic residue.

Belongs to the phospholipase A2 family. Group I subfamily. D49 sub-subfamily. The cofactor is Ca(2+). In terms of tissue distribution, expressed by the venom gland.

The protein resides in the secreted. The catalysed reaction is a 1,2-diacyl-sn-glycero-3-phosphocholine + H2O = a 1-acyl-sn-glycero-3-phosphocholine + a fatty acid + H(+). PLA2 catalyzes the calcium-dependent hydrolysis of the 2-acyl groups in 3-sn-phosphoglycerides. The polypeptide is Acidic phospholipase A2 3 (Naja sagittifera (Andaman cobra)).